The sequence spans 384 residues: Endoglucanase (384 aa).

Residues 1–25 (MTRRRLLHAGTLAGVAALLPAAALA) form the signal peptide. Catalysis depends on Glu-63, which acts as the Proton donor. Asp-124 functions as the Nucleophile in the catalytic mechanism.

The protein belongs to the glycosyl hydrolase 8 (cellulase D) family.

The protein localises to the secreted. The catalysed reaction is Endohydrolysis of (1-&gt;4)-beta-D-glucosidic linkages in cellulose, lichenin and cereal beta-D-glucans.. It participates in glycan metabolism; bacterial cellulose biosynthesis. In terms of biological role, hydrolyzes carboxymethylcellulose. The polypeptide is Endoglucanase (bcsZ) (Xanthomonas axonopodis pv. citri (strain 306)).